Consider the following 1162-residue polypeptide: Protein OBERON 4 (1162 aa).

4 stretches are compositionally biased toward basic and acidic residues: residues 1 to 19 (MKRL…KNVD), 61 to 77 (NRDL…HRSE), 90 to 99 (FRSERERPNR), and 118 to 134 (VDDR…DRSL). 4 disordered regions span residues 1-235 (MKRL…PSCS), 251-307 (IGKS…VSQN), 321-346 (DHRD…DKDE), and 441-485 (SKTE…QSGV). Over residues 135-146 (KSPSWSRDSPNE) the composition is skewed to polar residues. Over residues 148–157 (SKFKPLDSRN) the composition is skewed to basic and acidic residues. Positions 163–182 (KSLASPTWSKDSGSEQSKSV) are enriched in polar residues. Over residues 203 to 213 (EMEEGELEPEP) the composition is skewed to acidic residues. Composition is skewed to basic and acidic residues over residues 225 to 235 (TKHDCKLPSCS), 263 to 300 (SNRE…HATE), 336 to 346 (DTVDEKGDKDE), and 441 to 457 (SKTE…KDDN). Residues 835–899 (ACMCLVCSNF…QFHCVACNHP (65 aa)) form a PHD-type zinc finger. Residues 1065-1161 (MKQAEAEMFQ…KMEMTKQSLA (97 aa)) adopt a coiled-coil conformation.

In terms of assembly, self-interacts. Interacts with OBE1 and OBE2. Interacts with OBE3.

Its subcellular location is the nucleus. Probable transcription factor that functions redundantly with OBE3 in specification of the hypophysis and establishment of the embryonic root. Involved in the activation of ARF5/MP-dependent gene expression during embryonic root meristem initiation. Involved in shoot meristem homeostasis. This is Protein OBERON 4 from Arabidopsis thaliana (Mouse-ear cress).